A 116-amino-acid polypeptide reads, in one-letter code: Ribosome-binding factor A (116 aa).

Belongs to the RbfA family. Monomer. Binds 30S ribosomal subunits, but not 50S ribosomal subunits or 70S ribosomes.

It is found in the cytoplasm. Functionally, one of several proteins that assist in the late maturation steps of the functional core of the 30S ribosomal subunit. Associates with free 30S ribosomal subunits (but not with 30S subunits that are part of 70S ribosomes or polysomes). Required for efficient processing of 16S rRNA. May interact with the 5'-terminal helix region of 16S rRNA. The sequence is that of Ribosome-binding factor A from Streptococcus mutans serotype c (strain ATCC 700610 / UA159).